The chain runs to 200 residues: 3-isopropylmalate dehydratase small subunit (200 aa).

It belongs to the LeuD family. LeuD type 1 subfamily. In terms of assembly, heterodimer of LeuC and LeuD.

It carries out the reaction (2R,3S)-3-isopropylmalate = (2S)-2-isopropylmalate. It functions in the pathway amino-acid biosynthesis; L-leucine biosynthesis; L-leucine from 3-methyl-2-oxobutanoate: step 2/4. Functionally, catalyzes the isomerization between 2-isopropylmalate and 3-isopropylmalate, via the formation of 2-isopropylmaleate. The protein is 3-isopropylmalate dehydratase small subunit of Vibrio atlanticus (strain LGP32) (Vibrio splendidus (strain Mel32)).